A 124-amino-acid polypeptide reads, in one-letter code: Histone H2B 1/2 (124 aa).

Residues 1-32 (MPEPAKAAPKKGSKKAVTKTAGKGGKKRKRTR) are disordered. N6-acetyllysine is present on residues Lys6 and Lys11. Over residues 8-17 (APKKGSKKAV) the composition is skewed to basic residues. At Ser13 the chain carries Phosphoserine. 2 positions are modified to N6-acetyllysine: Lys14 and Lys19. Ser111 carries O-linked (GlcNAc) serine glycosylation. Lys119 participates in a covalent cross-link: Glycyl lysine isopeptide (Lys-Gly) (interchain with G-Cter in ubiquitin).

The protein belongs to the histone H2B family. As to quaternary structure, the nucleosome is a histone octamer containing two molecules each of H2A, H2B, H3 and H4 assembled in one H3-H4 heterotetramer and two H2A-H2B heterodimers. The octamer wraps approximately 147 bp of DNA. In terms of processing, monoubiquitination of Lys-119 by the BRE1 gives a specific tag for epigenetic transcriptional activation and is also prerequisite for histone H3 'Lys-4' and 'Lys-79' methylation. Post-translationally, phosphorylated during apoptosis; which facilitates apoptotic chromatin condensation. GlcNAcylation at Ser-111 promotes monoubiquitination of Lys-119. It fluctuates in response to extracellular glucose, and associates with transcribed genes.

It is found in the nucleus. The protein resides in the chromosome. Core component of nucleosome. Nucleosomes wrap and compact DNA into chromatin, limiting DNA accessibility to the cellular machineries which require DNA as a template. Histones thereby play a central role in transcription regulation, DNA repair, DNA replication and chromosomal stability. DNA accessibility is regulated via a complex set of post-translational modifications of histones, also called histone code, and nucleosome remodeling. The chain is Histone H2B 1/2 from Danio rerio (Zebrafish).